Consider the following 88-residue polypeptide: ATP synthase epsilon chain (88 aa).

This sequence belongs to the ATPase epsilon chain family. F-type ATPases have 2 components, CF(1) - the catalytic core - and CF(0) - the membrane proton channel. CF(1) has five subunits: alpha(3), beta(3), gamma(1), delta(1), epsilon(1). CF(0) has three main subunits: a, b and c.

It localises to the cell inner membrane. Produces ATP from ADP in the presence of a proton gradient across the membrane. The chain is ATP synthase epsilon chain (atpC) from Chlorobaculum tepidum (strain ATCC 49652 / DSM 12025 / NBRC 103806 / TLS) (Chlorobium tepidum).